Consider the following 109-residue polypeptide: Hainantoxin-XVIII-4 (109 aa).

An N-terminal signal peptide occupies residues 1–18 (MKLSIIIIATSLVIAVVA). Residues 19–46 (FPSKDSKAIENDKTEQRMEIVVQETARA) constitute a propeptide that is removed on maturation. Disulfide bonds link C55-C68, C59-C108, and C61-C81.

The protein belongs to the neurotoxin 25 family. F7 subfamily. In terms of tissue distribution, expressed by the venom gland.

The protein localises to the secreted. Functionally, putative ion channel inhibitor. In Cyriopagopus hainanus (Chinese bird spider), this protein is Hainantoxin-XVIII-4.